We begin with the raw amino-acid sequence, 140 residues long: Putative pre-16S rRNA nuclease (140 aa).

Belongs to the YqgF nuclease family.

The protein localises to the cytoplasm. Functionally, could be a nuclease involved in processing of the 5'-end of pre-16S rRNA. This Endomicrobium trichonymphae protein is Putative pre-16S rRNA nuclease.